The sequence spans 188 residues: Large ribosomal subunit protein eL18 (188 aa).

Residue Lys119 forms a Glycyl lysine isopeptide (Lys-Gly) (interchain with G-Cter in SUMO2) linkage. Ser130 bears the Phosphoserine mark. Residues 151–188 (HFGKAPGTPHSHTKPYVRSKGRKFERARGRRASRGYKN) are disordered. Position 158 is a phosphothreonine (Thr158). 2 stretches are compositionally biased toward basic residues: residues 161–171 (SHTKPYVRSKG) and 178–188 (RGRRASRGYKN). Lys164 is covalently cross-linked (Glycyl lysine isopeptide (Lys-Gly) (interchain with G-Cter in SUMO2)).

It belongs to the eukaryotic ribosomal protein eL18 family. In terms of assembly, component of the large ribosomal subunit.

It localises to the cytoplasm. It is found in the cytosol. Its subcellular location is the rough endoplasmic reticulum. In terms of biological role, component of the large ribosomal subunit. The ribosome is a large ribonucleoprotein complex responsible for the synthesis of proteins in the cell. This chain is Large ribosomal subunit protein eL18 (RPL18), found in Canis lupus familiaris (Dog).